Here is an 806-residue protein sequence, read N- to C-terminus: Ent-atiserene synthase KSL4, chloroplastic (806 aa).

Residues 1–75 constitute a chloroplast transit peptide; it reads MGIVALILIK…AKLFKKNEVC (75 aa). A disordered region spans residues 33–56; sequence ASLAGSGLPKTTPPKTASLQSHSP. The segment covering 45 to 55 has biased composition (polar residues); that stretch reads PPKTASLQSHS. Mg(2+)-binding residues include Asp-556, Asp-560, Asn-700, and Glu-708. The short motif at 556-560 is the DDXXD motif element; that stretch reads DDLFD.

The protein belongs to the terpene synthase family. Requires Mg(2+) as cofactor. In terms of tissue distribution, highly expressed in leaves, and, at low levels, in roots, stems and flowers.

Its subcellular location is the plastid. The protein localises to the chloroplast. The enzyme catalyses ent-copalyl diphosphate = ent-atiserene + diphosphate. The protein operates within secondary metabolite biosynthesis; terpenoid biosynthesis. Involved in the biosynthesis of ent-kaurene diterpenoids natural products such as oridonin, miltiradiene, eriocalyxin B and nezukol, known to exhibit antitumor, anti-inflammatory and antibacterial activities. Catalyzes the conversion of ent-copalyl diphosphate (ent-CPP) to ent-atiserene. In Isodon rubescens (Rabdosia rubescens), this protein is Ent-atiserene synthase KSL4, chloroplastic.